The following is a 511-amino-acid chain: L-arabinose isomerase (511 aa).

Mn(2+) is bound by residues E316, E343, H360, and H459.

This sequence belongs to the arabinose isomerase family. The cofactor is Mn(2+).

It carries out the reaction beta-L-arabinopyranose = L-ribulose. It participates in carbohydrate degradation; L-arabinose degradation via L-ribulose; D-xylulose 5-phosphate from L-arabinose (bacterial route): step 1/3. Catalyzes the conversion of L-arabinose to L-ribulose. This Arthrobacter sp. (strain FB24) protein is L-arabinose isomerase.